A 188-amino-acid chain; its full sequence is Large ribosomal subunit protein bL32m (188 aa).

Residues cysteine 110, cysteine 113, cysteine 123, and cysteine 126 each contribute to the Zn(2+) site. The segment at 162–188 (GETPSEHDQGKRIIERERKRPSWFTQN) is disordered. The span at 165–181 (PSEHDQGKRIIERERKR) shows a compositional bias: basic and acidic residues.

It belongs to the bacterial ribosomal protein bL32 family. As to quaternary structure, component of the mitochondrial ribosome large subunit (39S) which comprises a 16S rRNA and about 50 distinct proteins. MRPL32 precursor is processed by the m-AAA protease (composed of AFG3L2 and SPG7), which cleaves the N-terminal transit peptide. Cleavage by the m-AAA protease takes place prior to assembly into the large subunit, an essential step for mitochondrial ribosome (mitoribosome) assembly. Proper processing by the m-AAA protease is dependent on the zinc-binding region within the tightly folded C-terminal domain of MRPL32: zinc-dependent folding halts degradation initiated from the N-terminus and triggers the release of mature MRPL32.

The protein resides in the mitochondrion. Its function is as follows. Component of the mitochondrial large ribosomal subunit (mt-LSU). The mitochondrial ribosome (mitoribosome) is a large ribonucleoprotein complex responsible for the synthesis of proteins inside mitochondria. The chain is Large ribosomal subunit protein bL32m (MRPL32) from Bos taurus (Bovine).